We begin with the raw amino-acid sequence, 314 residues long: DegV domain-containing protein XCC3382 (314 aa).

In terms of domain architecture, DegV spans 3-307 (IGIVVDSACD…KGALAVAFAA (305 aa)). Residues threonine 63 and serine 96 each coordinate hexadecanoate.

In terms of biological role, may bind long-chain fatty acids, such as palmitate, and may play a role in lipid transport or fatty acid metabolism. The sequence is that of DegV domain-containing protein XCC3382 from Xanthomonas campestris pv. campestris (strain ATCC 33913 / DSM 3586 / NCPPB 528 / LMG 568 / P 25).